Consider the following 220-residue polypeptide: Deoxyribose-phosphate aldolase (220 aa).

The active-site Proton donor/acceptor is the Asp-89. Residue Lys-151 is the Schiff-base intermediate with acetaldehyde of the active site. The active-site Proton donor/acceptor is the Lys-180.

It belongs to the DeoC/FbaB aldolase family. DeoC type 1 subfamily.

It is found in the cytoplasm. The enzyme catalyses 2-deoxy-D-ribose 5-phosphate = D-glyceraldehyde 3-phosphate + acetaldehyde. The protein operates within carbohydrate degradation; 2-deoxy-D-ribose 1-phosphate degradation; D-glyceraldehyde 3-phosphate and acetaldehyde from 2-deoxy-alpha-D-ribose 1-phosphate: step 2/2. Catalyzes a reversible aldol reaction between acetaldehyde and D-glyceraldehyde 3-phosphate to generate 2-deoxy-D-ribose 5-phosphate. The sequence is that of Deoxyribose-phosphate aldolase from Streptococcus pneumoniae serotype 4 (strain ATCC BAA-334 / TIGR4).